The sequence spans 407 residues: Probable tRNA pseudouridine synthase D (407 aa).

Catalysis depends on Asp-81, which acts as the Nucleophile. In terms of domain architecture, TRUD spans 151–372; sequence GFPNYFGIQR…PGGRRELLIR (222 aa).

The protein belongs to the pseudouridine synthase TruD family.

The enzyme catalyses uridine(13) in tRNA = pseudouridine(13) in tRNA. Could be responsible for synthesis of pseudouridine from uracil-13 in transfer RNAs. The chain is Probable tRNA pseudouridine synthase D from Pyrococcus furiosus (strain ATCC 43587 / DSM 3638 / JCM 8422 / Vc1).